The sequence spans 244 residues: 5'-nucleotidase SurE (244 aa).

Asp8, Asp9, Ser39, and Asn96 together coordinate a divalent metal cation.

This sequence belongs to the SurE nucleotidase family. It depends on a divalent metal cation as a cofactor.

The protein resides in the cytoplasm. It carries out the reaction a ribonucleoside 5'-phosphate + H2O = a ribonucleoside + phosphate. Nucleotidase that shows phosphatase activity on nucleoside 5'-monophosphates. This is 5'-nucleotidase SurE from Thermus thermophilus (strain ATCC 27634 / DSM 579 / HB8).